A 512-amino-acid polypeptide reads, in one-letter code: Retinaldehyde dehydrogenase 3 (512 aa).

The interval 1 to 22 is disordered; it reads MATTNGAVENGQPDGKPPALPR. Ala-2 bears the N-acetylalanine mark. NAD(+) is bound by residues Lys-204, Glu-207, and 257-262; that span reads GSTEVG. Glu-280 functions as the Proton acceptor in the catalytic mechanism. Catalysis depends on Cys-314, which acts as the Nucleophile. Positions 361 and 411 each coordinate NAD(+).

Belongs to the aldehyde dehydrogenase family. In terms of assembly, homotetramer. As to expression, detected in embryonic head (at protein level). Ventral retina.

The protein localises to the cytoplasm. The enzyme catalyses retinal + NAD(+) + H2O = retinoate + NADH + 2 H(+). The catalysed reaction is all-trans-retinal + NAD(+) + H2O = all-trans-retinoate + NADH + 2 H(+). It carries out the reaction all-trans-13,14-dihydroretinal + NAD(+) + H2O = all-trans-13,14-dihydroretinoate + NADH + 2 H(+). The protein operates within cofactor metabolism; retinol metabolism. Its function is as follows. Catalyzes the NAD-dependent oxidation of aldehyde substrates, such as all-trans-retinal and all-trans-13,14-dihydroretinal, to their corresponding carboxylic acids, all-trans-retinoate and all-trans-13,14-dihydroretinoate, respectively. High specificity for all-trans-retinal as substrate, can also accept acetaldehyde as substrate in vitro but with lower affinity. Required for the biosynthesis of normal levels of retinoate in the embryonic ocular and nasal regions; a critical lipid in the embryonic development of the eye and the nasal region. This Mus musculus (Mouse) protein is Retinaldehyde dehydrogenase 3 (Aldh1a3).